We begin with the raw amino-acid sequence, 1405 residues long: DNA-directed RNA polymerase subunit beta' (1405 aa).

Zn(2+)-binding residues include Cys-65, Cys-67, Cys-80, and Cys-83. Mg(2+) contacts are provided by Asp-468, Asp-470, and Asp-472. Zn(2+)-binding residues include Cys-811, Cys-885, Cys-892, and Cys-895.

The protein belongs to the RNA polymerase beta' chain family. The RNAP catalytic core consists of 2 alpha, 1 beta, 1 beta' and 1 omega subunit. When a sigma factor is associated with the core the holoenzyme is formed, which can initiate transcription. It depends on Mg(2+) as a cofactor. The cofactor is Zn(2+).

The enzyme catalyses RNA(n) + a ribonucleoside 5'-triphosphate = RNA(n+1) + diphosphate. Functionally, DNA-dependent RNA polymerase catalyzes the transcription of DNA into RNA using the four ribonucleoside triphosphates as substrates. This Azobacteroides pseudotrichonymphae genomovar. CFP2 protein is DNA-directed RNA polymerase subunit beta'.